A 402-amino-acid chain; its full sequence is Acetate kinase (402 aa).

Asn13 serves as a coordination point for Mg(2+). Lys20 is an ATP binding site. Arg94 lines the substrate pocket. Asp151 (proton donor/acceptor) is an active-site residue. ATP-binding positions include His211–Gly215, Asp285–Arg287, and Gly333–Asn337. Glu387 serves as a coordination point for Mg(2+).

The protein belongs to the acetokinase family. In terms of assembly, homodimer. It depends on Mg(2+) as a cofactor. Mn(2+) is required as a cofactor.

The protein resides in the cytoplasm. The catalysed reaction is acetate + ATP = acetyl phosphate + ADP. It functions in the pathway metabolic intermediate biosynthesis; acetyl-CoA biosynthesis; acetyl-CoA from acetate: step 1/2. Its function is as follows. Catalyzes the formation of acetyl phosphate from acetate and ATP. Can also catalyze the reverse reaction. The sequence is that of Acetate kinase from Nocardia farcinica (strain IFM 10152).